A 415-amino-acid polypeptide reads, in one-letter code: Tyrosine--tRNA ligase (415 aa).

Y34 serves as a coordination point for L-tyrosine. A 'HIGH' region motif is present at residues 39 to 48; that stretch reads PTADSLHLGH. L-tyrosine-binding residues include Y164 and Q168. The 'KMSKS' region signature appears at 226-230; the sequence is KFGKS. ATP is bound at residue K229. Residues 348-415 enclose the S4 RNA-binding domain; sequence KNIVDFLVDG…KKKYFLGKIK (68 aa).

Belongs to the class-I aminoacyl-tRNA synthetase family. TyrS type 1 subfamily. Homodimer.

Its subcellular location is the cytoplasm. It catalyses the reaction tRNA(Tyr) + L-tyrosine + ATP = L-tyrosyl-tRNA(Tyr) + AMP + diphosphate + H(+). Functionally, catalyzes the attachment of tyrosine to tRNA(Tyr) in a two-step reaction: tyrosine is first activated by ATP to form Tyr-AMP and then transferred to the acceptor end of tRNA(Tyr). The chain is Tyrosine--tRNA ligase from Leuconostoc citreum (strain KM20).